The following is a 162-amino-acid chain: Protein archease (162 aa).

Residues Asp-34, Asp-161, and Ile-162 each contribute to the Ca(2+) site.

Belongs to the archease family. Component of the tRNA-splicing ligase complex.

Its function is as follows. Component of the tRNA-splicing ligase complex required to facilitate the enzymatic turnover of catalytic subunit RTCB. Together with ddx1, acts by facilitating the guanylylation of RTCB, a key intermediate step in tRNA ligation. The polypeptide is Protein archease (Ictalurus punctatus (Channel catfish)).